The primary structure comprises 344 residues: Phosphoribosylformylglycinamidine cyclo-ligase (344 aa).

The protein belongs to the AIR synthase family.

The protein localises to the cytoplasm. It catalyses the reaction 2-formamido-N(1)-(5-O-phospho-beta-D-ribosyl)acetamidine + ATP = 5-amino-1-(5-phospho-beta-D-ribosyl)imidazole + ADP + phosphate + H(+). It participates in purine metabolism; IMP biosynthesis via de novo pathway; 5-amino-1-(5-phospho-D-ribosyl)imidazole from N(2)-formyl-N(1)-(5-phospho-D-ribosyl)glycinamide: step 2/2. The chain is Phosphoribosylformylglycinamidine cyclo-ligase from Neisseria meningitidis serogroup C / serotype 2a (strain ATCC 700532 / DSM 15464 / FAM18).